A 371-amino-acid polypeptide reads, in one-letter code: Assembly protein G7 (371 aa).

It belongs to the chordopoxvirinae G7 family. Part of a complex composed of A30, G7, F10 kinase, A15, D2, D3, and J1. In terms of processing, phosphorylated on serines by F10 kinase, phosphorylation state is regulated by H1 phosphatase. Undergoes proteolytic processing during morphogenesis, probably required for the transformation of immature virions (IV) into mature virions (MV).

The protein resides in the host cytoplasm. It is found in the virion. In terms of biological role, late protein which is a part of a large complex required for early virion morphogenesis. This complex participates in the formation of virosomes and the incorporation of virosomal contents into nascent immature virions. This chain is Assembly protein G7, found in Homo sapiens (Human).